We begin with the raw amino-acid sequence, 362 residues long: Probable dual-specificity RNA methyltransferase RlmN (362 aa).

Glu105 (proton acceptor) is an active-site residue. Positions 111 to 344 constitute a Radical SAM core domain; it reads HEYGNSICVT…VTIRREQGHD (234 aa). An intrachain disulfide couples Cys118 to Cys349. Cys125, Cys129, and Cys132 together coordinate [4Fe-4S] cluster. Residues 175–176, Ser207, 230–232, and Asn306 each bind S-adenosyl-L-methionine; these read GE and SLH. Catalysis depends on Cys349, which acts as the S-methylcysteine intermediate.

Belongs to the radical SAM superfamily. RlmN family. It depends on [4Fe-4S] cluster as a cofactor.

Its subcellular location is the cytoplasm. It catalyses the reaction adenosine(2503) in 23S rRNA + 2 reduced [2Fe-2S]-[ferredoxin] + 2 S-adenosyl-L-methionine = 2-methyladenosine(2503) in 23S rRNA + 5'-deoxyadenosine + L-methionine + 2 oxidized [2Fe-2S]-[ferredoxin] + S-adenosyl-L-homocysteine. The catalysed reaction is adenosine(37) in tRNA + 2 reduced [2Fe-2S]-[ferredoxin] + 2 S-adenosyl-L-methionine = 2-methyladenosine(37) in tRNA + 5'-deoxyadenosine + L-methionine + 2 oxidized [2Fe-2S]-[ferredoxin] + S-adenosyl-L-homocysteine. Functionally, specifically methylates position 2 of adenine 2503 in 23S rRNA and position 2 of adenine 37 in tRNAs. This Bacillus cereus (strain G9842) protein is Probable dual-specificity RNA methyltransferase RlmN.